Reading from the N-terminus, the 184-residue chain is Photosystem I assembly protein Ycf4 (184 aa).

Transmembrane regions (helical) follow at residues 21-43 (NFCW…ISSY) and 58-80 (LFFP…SSYL).

The protein belongs to the Ycf4 family.

The protein localises to the plastid. Its subcellular location is the chloroplast thylakoid membrane. Functionally, seems to be required for the assembly of the photosystem I complex. The polypeptide is Photosystem I assembly protein Ycf4 (Carpobrotus chilensis (Sea fig)).